The sequence spans 230 residues: Sugar fermentation stimulation protein homolog (230 aa).

It belongs to the SfsA family.

The protein is Sugar fermentation stimulation protein homolog of Ruegeria pomeroyi (strain ATCC 700808 / DSM 15171 / DSS-3) (Silicibacter pomeroyi).